The chain runs to 173 residues: uncharacterized protein (173 aa).

This is an uncharacterized protein from Bacillus subtilis (strain 168).